The sequence spans 250 residues: Aquaporin (250 aa).

Residues 1–15 are Cytoplasmic-facing; that stretch reads MTRETLKTLQSTFGE. Residues 16–36 form a helical membrane-spanning segment; the sequence is MVASFVFGFAVYSALLGSALT. The Extracellular portion of the chain corresponds to 37-42; it reads EQSAAR. The helical transmembrane segment at 43–63 threads the bilayer; it reads VIVGLTVGFSGICVIYSFCDV. Residues 64-86 lie on the Cytoplasmic side of the membrane; sequence TVAHFNPAITLAAILTCKLGVLR. An NPA motif is present at residues 69–71; sequence NPA. Residues 87–107 form a helical membrane-spanning segment; sequence GIGYIVAQYIGFILAVCALLP. Over 108–133 the chain is Extracellular; that stretch reads CSPVGYKETLNIIRPTPSPFGGDNLN. A helical transmembrane segment spans residues 134-154; it reads VFFTEFFLTAILVHVAFATAV. Residues 155-179 lie on the Cytoplasmic side of the membrane; it reads NPYKPKTDTEGKFVDPDEEEPVDRR. The helical transmembrane segment at 180–200 threads the bilayer; the sequence is ITAPLCIGLTLGFLAFLGLAS. The Extracellular segment spans residues 201 to 224; it reads SGGAFNPGLTLAPVIMSNTWNHFW. Residues 206-208 carry the NPG motif; that stretch reads NPG. Residues 225-245 traverse the membrane as a helical segment; it reads AYFAGQYLGGFVGGLLQVLVL. Topologically, residues 246–250 are cytoplasmic; it reads YKLSF.

It belongs to the MIP/aquaporin (TC 1.A.8) family.

Its subcellular location is the cell membrane. Water channel required to facilitate the transport of water across membranes. Involved in osmotolerance. The chain is Aquaporin (AQP) from Encephalitozoon cuniculi (strain GB-M1) (Microsporidian parasite).